Reading from the N-terminus, the 394-residue chain is Chorismate synthase (394 aa).

Positions 42 and 48 each coordinate NADP(+). Residues arginine 137–serine 139, glutamine 258–alanine 259, glycine 302, lysine 317–threonine 321, and arginine 343 contribute to the FMN site.

Belongs to the chorismate synthase family. In terms of assembly, homotetramer. FMNH2 serves as cofactor.

It catalyses the reaction 5-O-(1-carboxyvinyl)-3-phosphoshikimate = chorismate + phosphate. It functions in the pathway metabolic intermediate biosynthesis; chorismate biosynthesis; chorismate from D-erythrose 4-phosphate and phosphoenolpyruvate: step 7/7. Functionally, catalyzes the anti-1,4-elimination of the C-3 phosphate and the C-6 proR hydrogen from 5-enolpyruvylshikimate-3-phosphate (EPSP) to yield chorismate, which is the branch point compound that serves as the starting substrate for the three terminal pathways of aromatic amino acid biosynthesis. This reaction introduces a second double bond into the aromatic ring system. This is Chorismate synthase from Streptomyces coelicolor (strain ATCC BAA-471 / A3(2) / M145).